The following is a 598-amino-acid chain: Chaperone protein DnaK (598 aa).

A Phosphothreonine; by autocatalysis modification is found at Thr180.

Belongs to the heat shock protein 70 family.

In terms of biological role, acts as a chaperone. The chain is Chaperone protein DnaK from Thermosipho africanus (strain TCF52B).